A 365-amino-acid chain; its full sequence is Alanine racemase (365 aa).

Residue lysine 36 is the Proton acceptor; specific for D-alanine of the active site. Position 36 is an N6-(pyridoxal phosphate)lysine (lysine 36). Arginine 132 provides a ligand contact to substrate. Tyrosine 257 acts as the Proton acceptor; specific for L-alanine in catalysis. Methionine 305 lines the substrate pocket.

It belongs to the alanine racemase family. Pyridoxal 5'-phosphate serves as cofactor.

It catalyses the reaction L-alanine = D-alanine. The protein operates within amino-acid biosynthesis; D-alanine biosynthesis; D-alanine from L-alanine: step 1/1. Catalyzes the interconversion of L-alanine and D-alanine. May also act on other amino acids. The polypeptide is Alanine racemase (alr) (Xylella fastidiosa (strain Temecula1 / ATCC 700964)).